The following is a 214-amino-acid chain: 3,4-dihydroxy-2-butanone 4-phosphate synthase (214 aa).

Residues 37-38 (RE), D42, 150-154 (RPGHT), and E174 each bind D-ribulose 5-phosphate. Mg(2+) is bound at residue E38. Position 153 (H153) interacts with Mg(2+).

Belongs to the DHBP synthase family. Homodimer. The cofactor is Mg(2+). Requires Mn(2+) as cofactor.

The enzyme catalyses D-ribulose 5-phosphate = (2S)-2-hydroxy-3-oxobutyl phosphate + formate + H(+). It participates in cofactor biosynthesis; riboflavin biosynthesis; 2-hydroxy-3-oxobutyl phosphate from D-ribulose 5-phosphate: step 1/1. Catalyzes the conversion of D-ribulose 5-phosphate to formate and 3,4-dihydroxy-2-butanone 4-phosphate. This is 3,4-dihydroxy-2-butanone 4-phosphate synthase from Mannheimia succiniciproducens (strain KCTC 0769BP / MBEL55E).